A 307-amino-acid polypeptide reads, in one-letter code: UDP-3-O-acyl-N-acetylglucosamine deacetylase (307 aa).

Zn(2+)-binding residues include His80, His239, and Asp243. The active-site Proton donor is the His266.

It belongs to the LpxC family. Zn(2+) is required as a cofactor.

It catalyses the reaction a UDP-3-O-[(3R)-3-hydroxyacyl]-N-acetyl-alpha-D-glucosamine + H2O = a UDP-3-O-[(3R)-3-hydroxyacyl]-alpha-D-glucosamine + acetate. It functions in the pathway glycolipid biosynthesis; lipid IV(A) biosynthesis; lipid IV(A) from (3R)-3-hydroxytetradecanoyl-[acyl-carrier-protein] and UDP-N-acetyl-alpha-D-glucosamine: step 2/6. In terms of biological role, catalyzes the hydrolysis of UDP-3-O-myristoyl-N-acetylglucosamine to form UDP-3-O-myristoylglucosamine and acetate, the committed step in lipid A biosynthesis. This chain is UDP-3-O-acyl-N-acetylglucosamine deacetylase, found in Neisseria meningitidis serogroup A / serotype 4A (strain DSM 15465 / Z2491).